The following is a 589-amino-acid chain: Zinc finger and BTB domain-containing protein 46 (589 aa).

Residues 31 to 99 form the BTB domain; sequence CDVCVVVEGK…MYSAHLALTS (69 aa). Positions 173–330 are disordered; that stretch reads RRTSPANSSG…ASSSDSRGER (158 aa). Residues 197–207 are compositionally biased toward basic and acidic residues; the sequence is GKEDQEPKADG. K229 participates in a covalent cross-link: Glycyl lysine isopeptide (Lys-Gly) (interchain with G-Cter in SUMO2). S234 is modified (phosphoserine). Over residues 305–325 the composition is skewed to polar residues; sequence WPFSSRDSNADLSVTEASSSD. C2H2-type zinc fingers lie at residues 418–436 and 446–468; these read FKCP…LKRH and YPCE…TLVH. The disordered stretch occupies residues 512 to 589; that stretch reads PLDHGGGGGE…GPDKDFAWLS (78 aa). Positions 546 to 570 are enriched in acidic residues; that stretch reads EELGEDDEGLAPEDALLADDKDEED.

Post-translationally, sumoylated. Desumoylation by DESI1 reverses transcriptional repression activity.

It localises to the nucleus. Functions as a transcriptional repressor for PRDM1. This is Zinc finger and BTB domain-containing protein 46 (ZBTB46) from Homo sapiens (Human).